A 401-amino-acid polypeptide reads, in one-letter code: Anhydro-N-acetylmuramic acid kinase (401 aa).

Residue 25-32 (GTSLDGLD) coordinates ATP.

The protein belongs to the anhydro-N-acetylmuramic acid kinase family.

It carries out the reaction 1,6-anhydro-N-acetyl-beta-muramate + ATP + H2O = N-acetyl-D-muramate 6-phosphate + ADP + H(+). The protein operates within amino-sugar metabolism; 1,6-anhydro-N-acetylmuramate degradation. It functions in the pathway cell wall biogenesis; peptidoglycan recycling. In terms of biological role, catalyzes the specific phosphorylation of 1,6-anhydro-N-acetylmuramic acid (anhMurNAc) with the simultaneous cleavage of the 1,6-anhydro ring, generating MurNAc-6-P. Is required for the utilization of anhMurNAc either imported from the medium or derived from its own cell wall murein, and thus plays a role in cell wall recycling. This chain is Anhydro-N-acetylmuramic acid kinase, found in Pseudoalteromonas translucida (strain TAC 125).